A 217-amino-acid polypeptide reads, in one-letter code: 3-isopropylmalate dehydratase small subunit (217 aa).

Belongs to the LeuD family. LeuD type 1 subfamily. In terms of assembly, heterodimer of LeuC and LeuD.

The enzyme catalyses (2R,3S)-3-isopropylmalate = (2S)-2-isopropylmalate. It participates in amino-acid biosynthesis; L-leucine biosynthesis; L-leucine from 3-methyl-2-oxobutanoate: step 2/4. Its function is as follows. Catalyzes the isomerization between 2-isopropylmalate and 3-isopropylmalate, via the formation of 2-isopropylmaleate. The chain is 3-isopropylmalate dehydratase small subunit from Paracidovorax citrulli (strain AAC00-1) (Acidovorax citrulli).